A 689-amino-acid chain; its full sequence is Glycine--tRNA ligase beta subunit (689 aa).

It belongs to the class-II aminoacyl-tRNA synthetase family. As to quaternary structure, tetramer of two alpha and two beta subunits.

The protein resides in the cytoplasm. It carries out the reaction tRNA(Gly) + glycine + ATP = glycyl-tRNA(Gly) + AMP + diphosphate. In Dichelobacter nodosus (strain VCS1703A), this protein is Glycine--tRNA ligase beta subunit.